The sequence spans 176 residues: Cytochrome c-552 (176 aa).

Residues 12–32 (GALIGSLLFLLLMSWAASGIF) traverse the membrane as a helical; Signal-anchor segment. Cysteine 90, cysteine 93, histidine 94, methionine 126, and methionine 154 together coordinate heme c.

In terms of processing, binds 1 heme c group covalently per subunit.

Its subcellular location is the cell membrane. Mediates the electron transport between the cytochrome bc1 complex and cytochrome-c oxidase. This Paracoccus denitrificans protein is Cytochrome c-552 (cycM).